Consider the following 180-residue polypeptide: Inner membrane-spanning protein YciB (180 aa).

The next 5 helical transmembrane spans lie at 22 to 42, 50 to 70, 72 to 92, 121 to 141, and 149 to 169; these read IFVA…FTWL, MTLV…AFHS, LFIK…LLVS, LSWA…AFWL, and FKVF…GVYI.

Belongs to the YciB family.

The protein localises to the cell inner membrane. In terms of biological role, plays a role in cell envelope biogenesis, maintenance of cell envelope integrity and membrane homeostasis. This Yersinia pseudotuberculosis serotype O:1b (strain IP 31758) protein is Inner membrane-spanning protein YciB.